Consider the following 335-residue polypeptide: DNA primase small subunit PriS (335 aa).

Catalysis depends on residues Asp-96, Asp-98, and Asp-243.

This sequence belongs to the eukaryotic-type primase small subunit family. Heterodimer of a small subunit (PriS) and a large subunit (PriL). Requires Mg(2+) as cofactor. Mn(2+) serves as cofactor.

Its function is as follows. Catalytic subunit of DNA primase, an RNA polymerase that catalyzes the synthesis of short RNA molecules used as primers for DNA polymerase during DNA replication. The small subunit contains the primase catalytic core and has DNA synthesis activity on its own. Binding to the large subunit stabilizes and modulates the activity, increasing the rate of DNA synthesis while decreasing the length of the DNA fragments, and conferring RNA synthesis capability. The DNA polymerase activity may enable DNA primase to also catalyze primer extension after primer synthesis. May also play a role in DNA repair. In Archaeoglobus fulgidus (strain ATCC 49558 / DSM 4304 / JCM 9628 / NBRC 100126 / VC-16), this protein is DNA primase small subunit PriS.